We begin with the raw amino-acid sequence, 287 residues long: Probable endoribonuclease YicC (287 aa).

The protein belongs to the YicC/YloC family. Requires a divalent metal cation as cofactor.

Functionally, probably a ssRNA endonuclease. Might contribute to small RNA (sRNA) regulation. The chain is Probable endoribonuclease YicC from Haemophilus influenzae (strain ATCC 51907 / DSM 11121 / KW20 / Rd).